Here is a 697-residue protein sequence, read N- to C-terminus: Methionine--tRNA ligase (697 aa).

Positions 11 to 21 match the 'HIGH' region motif; that stretch reads PYANGPIHLGH. Residues cysteine 142, cysteine 145, cysteine 155, and cysteine 158 each coordinate Zn(2+). Positions 343–347 match the 'KMSKS' region motif; it reads KMSKS. Lysine 346 is an ATP binding site. The region spanning 595 to 697 is the tRNA-binding domain; the sequence is DFMKVEMTVA…DECKVGDKLA (103 aa).

It belongs to the class-I aminoacyl-tRNA synthetase family. MetG type 1 subfamily. In terms of assembly, homodimer. Requires Zn(2+) as cofactor.

It localises to the cytoplasm. It carries out the reaction tRNA(Met) + L-methionine + ATP = L-methionyl-tRNA(Met) + AMP + diphosphate. Functionally, is required not only for elongation of protein synthesis but also for the initiation of all mRNA translation through initiator tRNA(fMet) aminoacylation. This chain is Methionine--tRNA ligase, found in Psychrobacter sp. (strain PRwf-1).